The chain runs to 267 residues: MAAGEPRDGGGYYFRFLPHRTFSSLSAREITSRLRQWSMLGRIQAQAFSFDQTFQPYQKDDFVMAFFKDPNVIPNLQLLSDSSGQWTTLGSEVKKIEAINVPCTQLSMSFFQRLYDENIVRESGHIVKCLDSFCDPFLISDELRKVLLMEDSEKYEVFSPVEREEFLFCLFKHLCLGGSLCQYEDVLKPYLETAKLIYKDLVSVRKHPRTKEIQITSSVFKVKAYDSVGVCYPSPKEHEQTFSYFVVDPIKRHVNVLYHCYGVGHMA.

The protein belongs to the CFAP300 family. Interacts with DNAAF2. Expressed in the left-right organiser (LRO) node at 8.25 dpc.

It localises to the cytoplasm. The protein localises to the cytoskeleton. Its subcellular location is the cilium axoneme. Its function is as follows. Cilium- and flagellum-specific protein that plays a role in axonemal structure organization and motility. May play a role in outer and inner dynein arm assembly. This chain is Cilia- and flagella-associated protein 300, found in Mus musculus (Mouse).